Here is a 400-residue protein sequence, read N- to C-terminus: 1-deoxy-D-xylulose 5-phosphate reductoisomerase (400 aa).

NADPH is bound by residues threonine 17, glycine 18, serine 19, isoleucine 20, and asparagine 131. Lysine 132 serves as a coordination point for 1-deoxy-D-xylulose 5-phosphate. Glutamate 133 lines the NADPH pocket. Aspartate 157 serves as a coordination point for Mn(2+). Residues serine 158, glutamate 159, serine 188, and histidine 211 each coordinate 1-deoxy-D-xylulose 5-phosphate. Residue glutamate 159 coordinates Mn(2+). Glycine 217 serves as a coordination point for NADPH. 1-deoxy-D-xylulose 5-phosphate-binding residues include serine 224, asparagine 229, lysine 230, and glutamate 233. Glutamate 233 contributes to the Mn(2+) binding site.

This sequence belongs to the DXR family. Mg(2+) serves as cofactor. The cofactor is Mn(2+).

It catalyses the reaction 2-C-methyl-D-erythritol 4-phosphate + NADP(+) = 1-deoxy-D-xylulose 5-phosphate + NADPH + H(+). It participates in isoprenoid biosynthesis; isopentenyl diphosphate biosynthesis via DXP pathway; isopentenyl diphosphate from 1-deoxy-D-xylulose 5-phosphate: step 1/6. Its function is as follows. Catalyzes the NADPH-dependent rearrangement and reduction of 1-deoxy-D-xylulose-5-phosphate (DXP) to 2-C-methyl-D-erythritol 4-phosphate (MEP). The polypeptide is 1-deoxy-D-xylulose 5-phosphate reductoisomerase (Pseudomonas putida (strain ATCC 700007 / DSM 6899 / JCM 31910 / BCRC 17059 / LMG 24140 / F1)).